The sequence spans 268 residues: Undecaprenyl-diphosphatase 1 (268 aa).

A run of 7 helical transmembrane segments spans residues 5-25 (SIIS…IPVS), 43-63 (GNTF…LVYF), 84-104 (LAVL…HDFI), 107-127 (VLFE…FILL), 184-204 (AAEF…VLDL), 218-238 (LIAV…RSLL), and 247-267 (APFA…LLVI).

It belongs to the UppP family.

The protein localises to the cell inner membrane. The catalysed reaction is di-trans,octa-cis-undecaprenyl diphosphate + H2O = di-trans,octa-cis-undecaprenyl phosphate + phosphate + H(+). In terms of biological role, catalyzes the dephosphorylation of undecaprenyl diphosphate (UPP). Confers resistance to bacitracin. The protein is Undecaprenyl-diphosphatase 1 of Agrobacterium fabrum (strain C58 / ATCC 33970) (Agrobacterium tumefaciens (strain C58)).